The chain runs to 269 residues: uncharacterized protein (269 aa).

ATP contacts are provided by residues Gly12–Ser19 and Gly130–Ser137.

To M.jannaschii MJ0578.

This is an uncharacterized protein from Methanocaldococcus jannaschii (strain ATCC 43067 / DSM 2661 / JAL-1 / JCM 10045 / NBRC 100440) (Methanococcus jannaschii).